Here is a 364-residue protein sequence, read N- to C-terminus: tRNA 2-selenouridine synthase (364 aa).

The Rhodanese domain maps to 14–137 (LIADTPIIDV…LRQTAIQATI (124 aa)). The active-site S-selanylcysteine intermediate is the Cys97.

It belongs to the SelU family. Monomer.

It catalyses the reaction 5-methylaminomethyl-2-thiouridine(34) in tRNA + selenophosphate + (2E)-geranyl diphosphate + H2O + H(+) = 5-methylaminomethyl-2-selenouridine(34) in tRNA + (2E)-thiogeraniol + phosphate + diphosphate. The catalysed reaction is 5-methylaminomethyl-2-thiouridine(34) in tRNA + (2E)-geranyl diphosphate = 5-methylaminomethyl-S-(2E)-geranyl-thiouridine(34) in tRNA + diphosphate. It carries out the reaction 5-methylaminomethyl-S-(2E)-geranyl-thiouridine(34) in tRNA + selenophosphate + H(+) = 5-methylaminomethyl-2-(Se-phospho)selenouridine(34) in tRNA + (2E)-thiogeraniol. The enzyme catalyses 5-methylaminomethyl-2-(Se-phospho)selenouridine(34) in tRNA + H2O = 5-methylaminomethyl-2-selenouridine(34) in tRNA + phosphate. Functionally, involved in the post-transcriptional modification of the uridine at the wobble position (U34) of tRNA(Lys), tRNA(Glu) and tRNA(Gln). Catalyzes the conversion of 2-thiouridine (S2U-RNA) to 2-selenouridine (Se2U-RNA). Acts in a two-step process involving geranylation of 2-thiouridine (S2U) to S-geranyl-2-thiouridine (geS2U) and subsequent selenation of the latter derivative to 2-selenouridine (Se2U) in the tRNA chain. The polypeptide is tRNA 2-selenouridine synthase (Escherichia coli O6:K15:H31 (strain 536 / UPEC)).